A 124-amino-acid chain; its full sequence is Single-stranded DNA-binding protein (124 aa).

Belongs to the phi29likevirus single-strand-binding protein family. Monomer.

Its function is as follows. Single-stranded DNA binding protein required for the elongation during viral DNA replication by strand displacement. Displaced viral DNA strands are transiently coated with the ssDNA-binding protein and therefore protected against nucleases. The latter is then probably removed by the replisome that performs lagging strand synthesis or during the events that lead up to the recombination process. Stimulates in vitro DNA replication several fold. Has helix-destabilizing activity since it removes secondary structure from the ssDNA in replicative intermediates. The polypeptide is Single-stranded DNA-binding protein (5) (Bacillus subtilis (Bacteriophage phi-29)).